The chain runs to 111 residues: Cornifelin homolog (111 aa).

This sequence belongs to the cornifelin family.

The protein is Cornifelin homolog (cnfn) of Xenopus tropicalis (Western clawed frog).